Consider the following 195-residue polypeptide: ATP-dependent Clp protease proteolytic subunit (195 aa).

The active-site Nucleophile is the Ser98. His123 is an active-site residue.

This sequence belongs to the peptidase S14 family. As to quaternary structure, fourteen ClpP subunits assemble into 2 heptameric rings which stack back to back to give a disk-like structure with a central cavity, resembling the structure of eukaryotic proteasomes.

The protein localises to the cytoplasm. It catalyses the reaction Hydrolysis of proteins to small peptides in the presence of ATP and magnesium. alpha-casein is the usual test substrate. In the absence of ATP, only oligopeptides shorter than five residues are hydrolyzed (such as succinyl-Leu-Tyr-|-NHMec, and Leu-Tyr-Leu-|-Tyr-Trp, in which cleavage of the -Tyr-|-Leu- and -Tyr-|-Trp bonds also occurs).. Its function is as follows. Cleaves peptides in various proteins in a process that requires ATP hydrolysis. Has a chymotrypsin-like activity. Plays a major role in the degradation of misfolded proteins. In Thermodesulfovibrio yellowstonii (strain ATCC 51303 / DSM 11347 / YP87), this protein is ATP-dependent Clp protease proteolytic subunit.